Reading from the N-terminus, the 505-residue chain is MSVELVDYDEAVAEFDPVLGLEVHVELNTATKMFSGSPTEFGAEPNTQVDPTSLGLPGAMPVLNAKALESAIRIGLALNCSIAERCRFARKNYFYPDMPKNFQTSQYDEPIAFDGYLDVDVPASEDGTKPAFTYRVLIERAHMEEDTGKSLHVGGSTGRIHGAEFSLVDYNRAGIPLIEIVTRPLEGTGDRAPDVARAYVAALRDVLRSLDVSDVKMEQGSLRCDVNLSLRPTPQSPLGTRSETKNVNSLRSVERAVRYEVSRHAAVLRSGAKVVQETRHWHEDTGLTTSGREKSDAEDYRYFPEPDLVPIVPDRAWVEELRAALPEPPAQRRKRLHAEWGFSDLEFRDLVNAGAIDLVEATVAAGASPAAARKWWSGELARRANADGVELSALAVGPADVAELAALVEAGKLTDRLAREALEGVLAGEGSVAEVVEARGLVVVQDDGALVAAVEKVLAANPDVVEKIRGGKAQAAGALIGQVMKEMRGKADAARIRELVLERVG.

It belongs to the GatB/GatE family. GatB subfamily. As to quaternary structure, heterotrimer of A, B and C subunits.

It carries out the reaction L-glutamyl-tRNA(Gln) + L-glutamine + ATP + H2O = L-glutaminyl-tRNA(Gln) + L-glutamate + ADP + phosphate + H(+). The enzyme catalyses L-aspartyl-tRNA(Asn) + L-glutamine + ATP + H2O = L-asparaginyl-tRNA(Asn) + L-glutamate + ADP + phosphate + 2 H(+). Functionally, allows the formation of correctly charged Asn-tRNA(Asn) or Gln-tRNA(Gln) through the transamidation of misacylated Asp-tRNA(Asn) or Glu-tRNA(Gln) in organisms which lack either or both of asparaginyl-tRNA or glutaminyl-tRNA synthetases. The reaction takes place in the presence of glutamine and ATP through an activated phospho-Asp-tRNA(Asn) or phospho-Glu-tRNA(Gln). The chain is Aspartyl/glutamyl-tRNA(Asn/Gln) amidotransferase subunit B from Kineococcus radiotolerans (strain ATCC BAA-149 / DSM 14245 / SRS30216).